Consider the following 267-residue polypeptide: uncharacterized protein (267 aa).

The segment at 1 to 55 is disordered; that stretch reads MTEERKETFEEEINQSERIDADEEPLSRMSRKASRQSKQKQKQKQKPRQERGEST. Residues 9–24 are compositionally biased toward acidic residues; it reads FEEEINQSERIDADEE. Over residues 29–46 the composition is skewed to basic residues; it reads MSRKASRQSKQKQKQKQK. 5 helical membrane-spanning segments follow: residues 93 to 115, 135 to 157, 173 to 195, 199 to 221, and 234 to 256; these read YKYG…WFQL, GFLV…IWAV, AVLG…FAIV, MLTV…LYVQ, and YIYC…WPFI.

The protein localises to the cell membrane. This is an uncharacterized protein from Bacillus subtilis (strain 168).